A 349-amino-acid chain; its full sequence is DNA replication and repair protein RecF (349 aa).

29-36 is an ATP binding site; that stretch reads GLNGVGKT.

It belongs to the RecF family.

It is found in the cytoplasm. Functionally, the RecF protein is involved in DNA metabolism; it is required for DNA replication and normal SOS inducibility. RecF binds preferentially to single-stranded, linear DNA. It also seems to bind ATP. This Acholeplasma laidlawii (strain PG-8A) protein is DNA replication and repair protein RecF.